A 90-amino-acid chain; its full sequence is U7-theraphotoxin-Hhn1a 7 (90 aa).

An N-terminal signal peptide occupies residues 1 to 19 (MKTAIFTVVLALAVFAVLS). Residues 20 to 50 (FGWEANEKALSEGFTELIHEKEAASETEARE) constitute a propeptide that is removed on maturation. Cystine bridges form between Cys51–Cys65, Cys58–Cys70, and Cys64–Cys81.

Belongs to the neurotoxin 10 (Hwtx-1) family. 13 (Hntx-13) subfamily. Expressed by the venom gland.

It localises to the secreted. In terms of biological role, ion channel inhibitor. This Cyriopagopus hainanus (Chinese bird spider) protein is U7-theraphotoxin-Hhn1a 7.